The chain runs to 336 residues: MLQRGLWPWRTRLLPTPGTWRPARPWPLPPPPQVLRVKLCGNVKYYQSHHYSTVVPPDEITVIYRHGLPLVTLTLPSRKERCQFVVKPMLSTVGSFLQDLQNEDKGIKTAAIFTADGNMISASTLMDILLMNDFKLVINKIAYDVQCPKREKPSNEHTAEMEHMKSLVHRLFTILHLEESQKKREHHLLEKIDHLKEQLQPLEQVKAGIEAHSEAKTSGLLWAGLALLSIQGGALAWLTWWVYSWDIMEPVTYFITFANSMVFFAYFIVTRQDYTYSAVKSRQFLQFFHKKSKQQHFDVQQYNKLKEDLAKAKESLKQARHSLCLQMQVEELNEKN.

The N-terminal 35 residues, 1–35 (MLQRGLWPWRTRLLPTPGTWRPARPWPLPPPPQVL), are a transit peptide targeting the mitochondrion. The stretch at 179–210 (ESQKKREHHLLEKIDHLKEQLQPLEQVKAGIE) forms a coiled coil. 2 consecutive transmembrane segments (helical) span residues 220–240 (LLWAGLALLSIQGGALAWLTW) and 250–270 (PVTYFITFANSMVFFAYFIVT). Positions 297–323 (FDVQQYNKLKEDLAKAKESLKQARHSL) form a coiled coil.

It belongs to the MCU (TC 1.A.77) family. As to quaternary structure, homooligomer. Associates with the uniplex complex, composed of MCU, MICU1, MICU2 and EMRE/SMDT1, inhibiting its activity.

Its subcellular location is the mitochondrion inner membrane. Its function is as follows. Negative regulator of the mitochondrial calcium uniporter (MCU), a channel that mediates calcium uptake into the mitochondrial matrix. MCUB is required to limit mitochondrial calcium overload during stress. Acts as a dominant-negative regulator that displaces MCU from the functional uniplex complex and thereby decreases the association of calcium sensors MICU1 and MICU2, preventing channel gating. Mitochondrial calcium homeostasis plays key roles in mitochondrial metabolism. Acts as an important regulator of mitochondrial metabolism in response to stress in muscle cells: induced in response to fasting, leading to restrict mitochondrial calcium uptake, resulting in reprogramming of mitochondria toward fatty acid oxidation preference. Acts as a regulator of macrophage polarization during skeletal muscle regeneration: inhibition of mitochondrial calcium uptake drives differentiation of macrophages with anti-inflammatory profile, promoting the differentiation and fusion of satellite cells. In Homo sapiens (Human), this protein is Calcium uniporter regulatory subunit MCUb, mitochondrial.